The following is a 221-amino-acid chain: Ribosomal RNA small subunit methyltransferase Nep1 (221 aa).

Residues G174, G179, and 196–201 each bind S-adenosyl-L-methionine; that span reads IGDETM.

It belongs to the class IV-like SAM-binding methyltransferase superfamily. RNA methyltransferase NEP1 family. Homodimer.

The enzyme catalyses a pseudouridine in rRNA + S-adenosyl-L-methionine = an N(1)-methylpseudouridine in rRNA + S-adenosyl-L-homocysteine + H(+). In terms of biological role, methyltransferase involved in ribosomal biogenesis. Specifically catalyzes the N1-methylation of the pseudouridine corresponding to position 914 in M.jannaschii 16S rRNA. This chain is Ribosomal RNA small subunit methyltransferase Nep1, found in Pyrobaculum islandicum (strain DSM 4184 / JCM 9189 / GEO3).